The primary structure comprises 201 residues: 3-isopropylmalate dehydratase small subunit (201 aa).

The protein belongs to the LeuD family. LeuD type 1 subfamily. As to quaternary structure, heterodimer of LeuC and LeuD.

It catalyses the reaction (2R,3S)-3-isopropylmalate = (2S)-2-isopropylmalate. The protein operates within amino-acid biosynthesis; L-leucine biosynthesis; L-leucine from 3-methyl-2-oxobutanoate: step 2/4. Its function is as follows. Catalyzes the isomerization between 2-isopropylmalate and 3-isopropylmalate, via the formation of 2-isopropylmaleate. This is 3-isopropylmalate dehydratase small subunit from Shewanella baltica (strain OS155 / ATCC BAA-1091).